Consider the following 912-residue polypeptide: Type II beta methyltransferase M.BslI (912 aa).

This sequence belongs to the N(4)/N(6)-methyltransferase family. N(4) subfamily.

The catalysed reaction is a 2'-deoxycytidine in DNA + S-adenosyl-L-methionine = an N(4)-methyl-2'-deoxycytidine in DNA + S-adenosyl-L-homocysteine + H(+). Functionally, a beta subtype methylase. Recognizes the double-stranded sequence 5'-CCN(7)GG-3', methylates C-2 on both strands, and protects the DNA from cleavage by the BslI endonuclease. This is Type II beta methyltransferase M.BslI (bslIM) from Bacillus sp. (strain NEB-606).